The sequence spans 203 residues: Ribosomal RNA large subunit methyltransferase E (203 aa).

Positions 60, 62, 79, 95, and 119 each coordinate S-adenosyl-L-methionine. The Proton acceptor role is filled by K159.

This sequence belongs to the class I-like SAM-binding methyltransferase superfamily. RNA methyltransferase RlmE family.

It localises to the cytoplasm. It catalyses the reaction uridine(2552) in 23S rRNA + S-adenosyl-L-methionine = 2'-O-methyluridine(2552) in 23S rRNA + S-adenosyl-L-homocysteine + H(+). Specifically methylates the uridine in position 2552 of 23S rRNA at the 2'-O position of the ribose in the fully assembled 50S ribosomal subunit. This chain is Ribosomal RNA large subunit methyltransferase E, found in Pelagibacter ubique (strain HTCC1062).